A 426-amino-acid chain; its full sequence is Mitogen-activated protein kinase 8 (426 aa).

Residues 26–321 (YQNLKPIGSG…VDDALQHPYI (296 aa)) form the Protein kinase domain. ATP is bound by residues 33–38 (GSGAQG) and K55. The active-site Proton acceptor is the D151. A Phosphothreonine modification is found at T183. The TXY signature appears at 183–185 (TPY). Y185 carries the phosphotyrosine modification. The interval 375–426 (QPAPLGAAVTDGSQAHTSSSSGDASSMSTDPTLPSDTDSSLETSAGTLGCCR) is disordered. Residues 384–404 (TDGSQAHTSSSSGDASSMSTD) are compositionally biased toward low complexity. Residues 405-420 (PTLPSDTDSSLETSAG) show a composition bias toward polar residues.

This sequence belongs to the protein kinase superfamily. CMGC Ser/Thr protein kinase family. MAP kinase subfamily. It depends on Mg(2+) as a cofactor. Post-translationally, dually phosphorylated on Thr-183 and Tyr-185, which activates the enzyme. As to expression, strongly expressed in presumptive ectoderm and mesoderm regions and weakly expressed in endoderm regions during early stages of embryo development. Expressed in the head and dorsal regions during neurula and tailbud stages.

The protein resides in the cytoplasm. It localises to the nucleus. The protein localises to the synapse. The catalysed reaction is L-seryl-[protein] + ATP = O-phospho-L-seryl-[protein] + ADP + H(+). It carries out the reaction L-threonyl-[protein] + ATP = O-phospho-L-threonyl-[protein] + ADP + H(+). Its activity is regulated as follows. Activated by threonine and tyrosine phosphorylation, potentially by the dual-specificity kinase, MKK7. Indirectly activated by Wnt5a. In terms of biological role, responds to activation by environmental stress and pro-inflammatory cytokines by phosphorylating a number of transcription factors, and thus regulating transcriptional activity. Regulates morphogenic cell movements, controlling convergent extension during gastrulation. May play a role in the regulation of the circadian clock. In Xenopus laevis (African clawed frog), this protein is Mitogen-activated protein kinase 8 (mapk8).